The chain runs to 366 residues: Leucine dehydrogenase (366 aa).

Lys-80 is a catalytic residue. 180-186 (GVGHVAY) contacts NAD(+).

The protein belongs to the Glu/Leu/Phe/Val dehydrogenases family. In terms of assembly, homooctamer.

It carries out the reaction L-leucine + NAD(+) + H2O = 4-methyl-2-oxopentanoate + NH4(+) + NADH + H(+). Its pathway is amino-acid degradation; L-leucine degradation; 4-methyl-2-oxopentanoate from L-leucine (dehydrogenase route): step 1/1. Its activity is regulated as follows. Inhibited by pyridoxal phosphate. Catalyzes the reversible deamination of L-leucine to 4-methyl-2-oxopentanoate. Exhibits the highest activity with L-leucine as substrate, but can also use other L-amino acids such as L-isoleucine, L-valine and L-2-aminovaleric acid. All of the oxo analogs of the amino acid substrates serve as good substrates for the reverse reaction. This is Leucine dehydrogenase (ldh) from Thermoactinomyces intermedius.